The following is a 106-amino-acid chain: ATP-dependent Clp protease adapter protein ClpS (106 aa).

Belongs to the ClpS family. In terms of assembly, binds to the N-terminal domain of the chaperone ClpA.

Functionally, involved in the modulation of the specificity of the ClpAP-mediated ATP-dependent protein degradation. This is ATP-dependent Clp protease adapter protein ClpS from Vibrio cholerae serotype O1 (strain ATCC 39541 / Classical Ogawa 395 / O395).